Here is a 78-residue protein sequence, read N- to C-terminus: Small, acid-soluble spore protein Tlp (78 aa).

The segment at 32–78 is disordered; it reads SEEQLSFASEAEQEQIREKNERRNESIEAMRNEIHDEAEARKNGYHQ. Residues 45–78 show a composition bias toward basic and acidic residues; sequence EQIREKNERRNESIEAMRNEIHDEAEARKNGYHQ.

It belongs to the Tlp family.

Its subcellular location is the spore core. The protein is Small, acid-soluble spore protein Tlp of Bacillus licheniformis (strain ATCC 14580 / DSM 13 / JCM 2505 / CCUG 7422 / NBRC 12200 / NCIMB 9375 / NCTC 10341 / NRRL NRS-1264 / Gibson 46).